The following is a 374-amino-acid chain: Methylthioribose-1-phosphate isomerase (374 aa).

Aspartate 251 serves as the catalytic Proton donor.

Belongs to the eIF-2B alpha/beta/delta subunits family. MtnA subfamily.

The protein resides in the cytoplasm. It localises to the nucleus. It catalyses the reaction 5-(methylsulfanyl)-alpha-D-ribose 1-phosphate = 5-(methylsulfanyl)-D-ribulose 1-phosphate. The protein operates within amino-acid biosynthesis; L-methionine biosynthesis via salvage pathway; L-methionine from S-methyl-5-thio-alpha-D-ribose 1-phosphate: step 1/6. Functionally, catalyzes the interconversion of methylthioribose-1-phosphate (MTR-1-P) into methylthioribulose-1-phosphate (MTRu-1-P). The sequence is that of Methylthioribose-1-phosphate isomerase (IDI2) from Oryza sativa subsp. japonica (Rice).